We begin with the raw amino-acid sequence, 768 residues long: Levansucrase (768 aa).

An N-terminal signal peptide occupies residues 1 to 36; that stretch reads MLENKKHKKMSLSGKSLLMGTLSTAAIVLSASTVNA. 4 stretches are compositionally biased toward polar residues: residues 57-68, 80-99, 106-134, and 143-153; these read SASVNKNDNSGL, TETN…SQVN, SSTQ…QDSD, and NNSQGQSSTSS. Residues 57–158 form a disordered region; sequence SASVNKNDNS…SSTSSEKTEL (102 aa). Sucrose-binding residues include Trp-250, Asp-251, and Ser-320. Residue Asp-251 is the Nucleophile of the active site. Asp-398 lines the Ca(2+) pocket. Arg-403 and Asp-404 together coordinate sucrose. Ca(2+) contacts are provided by Gln-429, Asn-468, and Asp-502. Glu-503 contributes to the sucrose binding site. Glu-505 serves as the catalytic Proton donor/acceptor. A sucrose-binding site is contributed by Arg-523. The disordered stretch occupies residues 688–736; sequence HQPVTPNVPTTPEKPENPTTPNTPDTPRTPEVPTTPVKKTTQSELPKAG. Over residues 691 to 727 the composition is skewed to low complexity; it reads VTPNVPTTPEKPENPTTPNTPDTPRTPEVPTTPVKKT. The LPXTG sorting signal signature appears at 732 to 736; it reads LPKAG. Ala-735 carries the post-translational modification Pentaglycyl murein peptidoglycan amidated alanine. The propeptide at 736-768 is removed by sortase; sequence GAKDGIAATILGAISSMLGVIGLAGISKRKRNN.

This sequence belongs to the glycosyl hydrolase 68 family.

It localises to the secreted. It is found in the cell wall. The protein localises to the cell surface. The catalysed reaction is [6)-beta-D-fructofuranosyl-(2-&gt;](n) alpha-D-glucopyranoside + sucrose = [6)-beta-D-fructofuranosyl-(2-&gt;](n+1) alpha-D-glucopyranoside + D-glucose. With respect to regulation, calcium ions are required for optimal activity, but do not seem to be essential since addition of EDTA causes only a 48% drop in activity. Ca(2+) may play an important structural role and promote stability of levansucrase. Fructosyltransferase that catalyzes the polymerization of the fructose moiety of sucrose to produce levan polymer and the fructo-oligosaccharide (FOS) 1-kestose. Is also able to convert raffinose into a fructan polymer and a single oligosaccharide (most likely Gal-Glc-Frc-Frc) in vitro; however, L.gasseri strain DSM 20077 is unable to ferment raffinose. Also displays sucrose hydrolase activity. This Lactobacillus gasseri protein is Levansucrase.